Here is a 434-residue protein sequence, read N- to C-terminus: Putative D-alanyl-D-alanine carboxypeptidase (434 aa).

Residues 7 to 25 form a helical; Signal-anchor membrane-spanning segment; it reads YLSLLAVSCSVSAAKYPVL.

This sequence belongs to the peptidase S12 family. YfeW subfamily.

The protein localises to the cell inner membrane. The enzyme catalyses Preferential cleavage: (Ac)2-L-Lys-D-Ala-|-D-Ala. Also transpeptidation of peptidyl-alanyl moieties that are N-acyl substituents of D-alanine.. Functionally, penicillin-binding protein. Has low DD-carboxypeptidase activity. The protein is Putative D-alanyl-D-alanine carboxypeptidase of Escherichia coli (strain K12).